A 467-amino-acid chain; its full sequence is Putative serine/threonine-protein kinase R400 (467 aa).

In terms of domain architecture, Protein kinase spans 99 to 467 (GVKLIYIKSG…STGQKPTKKV (369 aa)). ATP is bound by residues 105-113 (IKSGTTGHT) and lysine 129. Catalysis depends on aspartate 272, which acts as the Proton acceptor. A disordered region spans residues 443–467 (LFQQGNGSKQPVPKKSTGQKPTKKV). The span at 458–467 (STGQKPTKKV) shows a compositional bias: polar residues.

This sequence belongs to the protein kinase superfamily. Ser/Thr protein kinase family.

The protein resides in the virion. The catalysed reaction is L-seryl-[protein] + ATP = O-phospho-L-seryl-[protein] + ADP + H(+). It catalyses the reaction L-threonyl-[protein] + ATP = O-phospho-L-threonyl-[protein] + ADP + H(+). The polypeptide is Putative serine/threonine-protein kinase R400 (Acanthamoeba polyphaga mimivirus (APMV)).